Consider the following 206-residue polypeptide: Large ribosomal subunit protein uL4 (206 aa).

Positions 46–77 (GTRAQKDREQVRHSTKKPFKQKGTGRARAGMT) are disordered. Basic residues predominate over residues 58–70 (HSTKKPFKQKGTG).

The protein belongs to the universal ribosomal protein uL4 family. Part of the 50S ribosomal subunit.

In terms of biological role, one of the primary rRNA binding proteins, this protein initially binds near the 5'-end of the 23S rRNA. It is important during the early stages of 50S assembly. It makes multiple contacts with different domains of the 23S rRNA in the assembled 50S subunit and ribosome. Its function is as follows. Forms part of the polypeptide exit tunnel. The polypeptide is Large ribosomal subunit protein uL4 (Polaromonas naphthalenivorans (strain CJ2)).